A 386-amino-acid polypeptide reads, in one-letter code: Succinate--CoA ligase [ADP-forming] subunit beta (386 aa).

The region spanning 9-244 is the ATP-grasp domain; it reads KEILHKFNVP…YDEEVKEEIE (236 aa). ATP is bound by residues K46, 53 to 55, E99, S102, and E107; that span reads GRG. N199 and D213 together coordinate Mg(2+). Substrate-binding positions include N264 and 321–323; that span reads GIM.

Belongs to the succinate/malate CoA ligase beta subunit family. As to quaternary structure, heterotetramer of two alpha and two beta subunits. Requires Mg(2+) as cofactor.

It carries out the reaction succinate + ATP + CoA = succinyl-CoA + ADP + phosphate. The catalysed reaction is GTP + succinate + CoA = succinyl-CoA + GDP + phosphate. The protein operates within carbohydrate metabolism; tricarboxylic acid cycle; succinate from succinyl-CoA (ligase route): step 1/1. Its function is as follows. Succinyl-CoA synthetase functions in the citric acid cycle (TCA), coupling the hydrolysis of succinyl-CoA to the synthesis of either ATP or GTP and thus represents the only step of substrate-level phosphorylation in the TCA. The beta subunit provides nucleotide specificity of the enzyme and binds the substrate succinate, while the binding sites for coenzyme A and phosphate are found in the alpha subunit. This chain is Succinate--CoA ligase [ADP-forming] subunit beta, found in Wolbachia sp. subsp. Brugia malayi (strain TRS).